Here is a 628-residue protein sequence, read N- to C-terminus: Alpha pinene synthase, chloroplastic (628 aa).

Residues 1-46 (MSLGCITPLASAMVGPKLVRPLIHHNPLFHHKPLNRPYLQTKIPLR) constitute a chloroplast transit peptide. Positions 381, 385, and 532 each coordinate Mg(2+). The DDXXD motif signature appears at 381-385 (DDMYD).

The protein belongs to the terpene synthase family. Tpsa subfamily. Mg(2+) serves as cofactor. The cofactor is Mn(2+).

The protein localises to the plastid. The protein resides in the chloroplast. The enzyme catalyses (2E)-geranyl diphosphate = alpha-pinene + diphosphate. Its pathway is secondary metabolite biosynthesis; terpenoid biosynthesis. Functionally, monoterpene synthase involved in the biosynthesis of volatile compounds. Mediates the conversion of (2E)-geranyl diphosphate (GPP) into alpha-pinene. The sequence is that of Alpha pinene synthase, chloroplastic from Chamaecyparis formosensis (Formosan cypress).